A 251-amino-acid polypeptide reads, in one-letter code: Triosephosphate isomerase (251 aa).

10–12 (NWK) is a binding site for substrate. His95 functions as the Electrophile in the catalytic mechanism. Glu167 serves as the catalytic Proton acceptor. Residues Gly173, Ser213, and 234–235 (GG) each bind substrate.

It belongs to the triosephosphate isomerase family. As to quaternary structure, homodimer.

The protein localises to the cytoplasm. It catalyses the reaction D-glyceraldehyde 3-phosphate = dihydroxyacetone phosphate. The protein operates within carbohydrate biosynthesis; gluconeogenesis. It participates in carbohydrate degradation; glycolysis; D-glyceraldehyde 3-phosphate from glycerone phosphate: step 1/1. Functionally, involved in the gluconeogenesis. Catalyzes stereospecifically the conversion of dihydroxyacetone phosphate (DHAP) to D-glyceraldehyde-3-phosphate (G3P). This Acetivibrio thermocellus (strain ATCC 27405 / DSM 1237 / JCM 9322 / NBRC 103400 / NCIMB 10682 / NRRL B-4536 / VPI 7372) (Clostridium thermocellum) protein is Triosephosphate isomerase.